The chain runs to 199 residues: Hematopoietic prostaglandin D synthase (199 aa).

Positions 2-79 constitute a GST N-terminal domain; it reads PNYKLTYFNM…YLTKNTDLAG (78 aa). Glutathione-binding positions include Y8, R14, W39, 49 to 51, and 63 to 64; these read GKI and QS. A GST C-terminal domain is found at 81 to 199; it reads TEMEQCHVDA…WIKRRPQTKL (119 aa).

This sequence belongs to the GST superfamily. Sigma family. In terms of assembly, homodimer. Requires glutathione as cofactor. Expressed in a number of megakaryocytic cell lines but not in platelets. Highly expressed in adipose tissue, macrophages and placenta. Also expressed at lower levels in lung, heart, lymph nodes, appendix, bone marrow and fetal liver.

It is found in the cytoplasm. The catalysed reaction is prostaglandin H2 = prostaglandin D2. It catalyses the reaction RX + glutathione = an S-substituted glutathione + a halide anion + H(+). It carries out the reaction 2-glyceryl-prostaglandin H2 = 2-glyceryl-prostaglandin D2. Prostaglandin PGD2 synthesis is stimulated by calcium and magnesium ions. One calcium or magnesium ion is bound between the subunits of the homodimer. The interactions with the protein are for the most part mediated via water molecules. Magnesium increases the affinity for glutathione, while calcium has no effect on the affinity for glutathione. In terms of biological role, bifunctional enzyme which catalyzes both the conversion of PGH2 to PGD2, a prostaglandin involved in smooth muscle contraction/relaxation and a potent inhibitor of platelet aggregation, and the conjugation of glutathione with a wide range of aryl halides and organic isothiocyanates. Also exhibits low glutathione-peroxidase activity towards cumene hydroperoxide. This chain is Hematopoietic prostaglandin D synthase, found in Homo sapiens (Human).